A 299-amino-acid chain; its full sequence is Ribosome-inactivating protein saporin-6 (299 aa).

A signal peptide spans 1–24 (MKIYVVATIAWILLQFSAWTTTDA). The active site involves glutamate 200. Positions 278–299 (SSNEANSTVRHYGPLKPTLLIT) are excised as a propeptide. A glycan (N-linked (GlcNAc...) asparagine) is linked at asparagine 283.

This sequence belongs to the ribosome-inactivating protein family. Type 1 RIP subfamily. As to expression, seeds and leaves of the plant.

The enzyme catalyses Endohydrolysis of the N-glycosidic bond at one specific adenosine on the 28S rRNA.. Ribosome-inactivating protein of type 1, inhibits protein synthesis in animal cells. Useful as immunotoxin for pharmacological applications. This Saponaria officinalis (Common soapwort) protein is Ribosome-inactivating protein saporin-6 (SAP6).